The following is a 474-amino-acid chain: Tocopherol cyclase, chloroplastic (474 aa).

The N-terminal 65 residues, 1–65, are a transit peptide targeting the chloroplast; that stretch reads MNLAVAAALP…TPTPQDRSLR (65 aa).

In terms of tissue distribution, present in all green tissues, both in bundle sheath and in mesophyll cells.

It localises to the plastid. Its subcellular location is the chloroplast. It carries out the reaction gamma-tocopherol = 2,3-dimethyl-6-phytylbenzene-1,4-diol. It participates in cofactor biosynthesis; tocopherol biosynthesis. Involved in the synthesis of tocopherols (vitamin E), which presumably protect photosynthetic complexes from oxidative stress. Catalyzes the conversion of 2,3-dimethyl-5-phytyl-1,4-hydroquinone (DMPQ) to gamma-tocopherol. The sequence is that of Tocopherol cyclase, chloroplastic from Zea mays (Maize).